The following is a 200-amino-acid chain: uncharacterized protein (200 aa).

This is an uncharacterized protein from Xylella fastidiosa (strain 9a5c).